A 179-amino-acid chain; its full sequence is Prion-like protein doppel (179 aa).

A signal peptide spans 1–25; that stretch reads MKNRLGTWWVAILCMLLASHLSTVK. The segment at 27–50 is flexible tail; it reads RGIKHRFKWNRKVLPSSGGQITEA. A globular region spans residues 51 to 155; it reads RVAENRPGAF…KHCDFWLERG (105 aa). Intrachain disulfides connect cysteine 95-cysteine 148 and cysteine 109-cysteine 143. 2 N-linked (GlcNAc...) asparagine glycosylation sites follow: asparagine 99 and asparagine 111. Residues 125-142 are cu(2+) binding; that stretch reads KQDSKLHQRVLWRLIKEI. Glycine 155 carries GPI-anchor amidated glycine lipidation. The propeptide at 156–179 is removed in mature form; it reads AALRVAVDQPAMVCLLGFVWFIVK.

This sequence belongs to the prion family. N-glycosylated. N-glycosylated at two distinct sites. In terms of processing, O-glycosylated. Detected in testis. Detected within seminiferous tubules, on round and elongated spermatids (at protein level). Not detected in brain (at protein level). Detected in testis, and at low levels in heart. Expression in brain is very low and barely detectable.

Its subcellular location is the cell membrane. Functionally, required for normal acrosome reaction and for normal male fertility. Can bind Cu(2+). The chain is Prion-like protein doppel (Prnd) from Mus musculus (Mouse).